Consider the following 486-residue polypeptide: ATP synthase subunit beta (486 aa).

Position 170-177 (170-177 (GGAGVGKT)) interacts with ATP.

The protein belongs to the ATPase alpha/beta chains family. F-type ATPases have 2 components, CF(1) - the catalytic core - and CF(0) - the membrane proton channel. CF(1) has five subunits: alpha(3), beta(3), gamma(1), delta(1), epsilon(1). CF(0) has three main subunits: a(1), b(2) and c(9-12). The alpha and beta chains form an alternating ring which encloses part of the gamma chain. CF(1) is attached to CF(0) by a central stalk formed by the gamma and epsilon chains, while a peripheral stalk is formed by the delta and b chains.

The protein resides in the cell membrane. The catalysed reaction is ATP + H2O + 4 H(+)(in) = ADP + phosphate + 5 H(+)(out). Produces ATP from ADP in the presence of a proton gradient across the membrane. The catalytic sites are hosted primarily by the beta subunits. The sequence is that of ATP synthase subunit beta from Kineococcus radiotolerans (strain ATCC BAA-149 / DSM 14245 / SRS30216).